Here is a 456-residue protein sequence, read N- to C-terminus: Alcohol acyltransferase 16 (456 aa).

Catalysis depends on proton acceptor residues H167 and D382.

This sequence belongs to the plant acyltransferase family. As to expression, expressed in fruit.

It catalyses the reaction 3-(methylsulfanyl)propanoyl-CoA + butan-1-ol = butyl 3-(methylsulfanyl)propanoate + CoA. The enzyme catalyses ethanol + benzoyl-CoA = ethyl benzoate + CoA. It carries out the reaction butan-1-ol + benzoyl-CoA = butyl benzoate + CoA. The catalysed reaction is 2-(methylsulfanyl)acetyl-CoA + butan-1-ol = butyl 2-(methylsulfanyl)acetate + CoA. In terms of biological role, involved in the biosynthesis of volatile esters which confer kiwifruit flavor. Alcohol acyl transferase that can use a wide range of alcohols as substrate to produce esters. Exhibits benzoyl-CoA:alcohol O-acyltransferase activity. The sequence is that of Alcohol acyltransferase 16 from Actinidia chinensis var. chinensis (Chinese soft-hair kiwi).